The primary structure comprises 421 residues: Gamma-glutamyl phosphate reductase (421 aa).

This sequence belongs to the gamma-glutamyl phosphate reductase family.

It is found in the cytoplasm. The enzyme catalyses L-glutamate 5-semialdehyde + phosphate + NADP(+) = L-glutamyl 5-phosphate + NADPH + H(+). It functions in the pathway amino-acid biosynthesis; L-proline biosynthesis; L-glutamate 5-semialdehyde from L-glutamate: step 2/2. In terms of biological role, catalyzes the NADPH-dependent reduction of L-glutamate 5-phosphate into L-glutamate 5-semialdehyde and phosphate. The product spontaneously undergoes cyclization to form 1-pyrroline-5-carboxylate. The chain is Gamma-glutamyl phosphate reductase from Pseudomonas aeruginosa (strain UCBPP-PA14).